The chain runs to 309 residues: MKLVLFLNMGGATNLQDCEVFLKNMFNDPYILGIKNRFLRKFVAWIITKARVKAMQENYKKMGGKSPLNELTQSLCNKLNLKQDEFKFDFVNLYVPPFATEILQKYTLNESDEIILFPLYPHHSCTTVTSSLEVLQNEISKQKIQAKVKTIDIFYKNELYNEMIVSHILAKKSKFDAKILIFSAHSLPQSIIDKGDLYEKHVNDHVEILKEKLKDHFDEFILAYQSKLGPVKWLEPNTSDVLANLNDKALIYPISFCIDCSETIFELGMEYKHLAKCDYDLISCPNDSDEFMEFILNSINSPLARKTSC.

2 residues coordinate Fe cation: His185 and Glu262.

It belongs to the ferrochelatase family.

The protein resides in the cytoplasm. It catalyses the reaction heme b + 2 H(+) = protoporphyrin IX + Fe(2+). It participates in porphyrin-containing compound metabolism; protoheme biosynthesis; protoheme from protoporphyrin-IX: step 1/1. Its function is as follows. Catalyzes the ferrous insertion into protoporphyrin IX. This Campylobacter jejuni subsp. jejuni serotype O:6 (strain 81116 / NCTC 11828) protein is Ferrochelatase.